A 205-amino-acid polypeptide reads, in one-letter code: Outer-membrane lipoprotein LolB (205 aa).

The N-terminal stretch at 1–17 (MFLRHCITFTLIALLAG) is a signal peptide. Cys-18 carries the N-palmitoyl cysteine lipid modification. Cys-18 is lipidated: S-diacylglycerol cysteine.

It belongs to the LolB family. Monomer.

It is found in the cell outer membrane. Plays a critical role in the incorporation of lipoproteins in the outer membrane after they are released by the LolA protein. This chain is Outer-membrane lipoprotein LolB, found in Pseudomonas putida (strain W619).